The sequence spans 3411 residues: Genome polyprotein (3411 aa).

At 1–104 the chain is on the cytoplasmic side; the sequence is MSGRKAQGKT…LSSRKRRSHD (104 aa). The tract at residues 38 to 72 is hydrophobic; homodimerization of capsid protein C; sequence PGPSRGVQGFIFFFLFNILTGKKITAQLKRLWKML. A propeptide spans 102 to 121 (ER anchor for the capsid protein C, removed in mature form by serine protease NS3); that stretch reads SHDVLTVQFLILGMLLMTGG. A helical transmembrane segment spans residues 105-125; sequence VLTVQFLILGMLLMTGGVTLM. At 126–244 the chain is on the extracellular side; that stretch reads RKNRWLLLNV…GERQLQKIER (119 aa). N-linked (GlcNAc...) asparagine; by host glycosylation is found at Asn134 and Asn150. Residues 245–265 traverse the membrane as a helical segment; it reads WFVRNPFFAVTALTIAYLVGS. The Cytoplasmic portion of the chain corresponds to 266-270; the sequence is NMTQR. The helical transmembrane segment at 271-285 threads the bilayer; the sequence is VVIALLVLAVGPAYS. The Extracellular segment spans residues 286 to 730; sequence AHCIGVADRD…TVFGSAFQGL (445 aa). 8 cysteine pairs are disulfide-bonded: Cys288/Cys315, Cys345/Cys401, Cys345/Cys406, Cys359/Cys390, Cys377/Cys401, Cys377/Cys406, Cys467/Cys568, and Cys585/Cys615. The tract at residues 383 to 396 is fusion peptide; sequence DRGWGNGCGLFGKG. A helical membrane pass occupies residues 731–751; that stretch reads FGGLNWITKVIMGAVLIWVGF. Over 752 to 757 the chain is Cytoplasmic; that stretch reads NTRNMT. Residues 758–778 form a helical membrane-spanning segment; it reads MSMSMILVGVIMMFLSLGVGA. At 779 to 1132 the chain is on the extracellular side; sequence DQGCAINFGK…LVRSWVTAGE (354 aa). 6 disulfide bridges follow: Cys782-Cys793, Cys833-Cys921, Cys957-Cys1002, Cys1058-Cys1107, Cys1069-Cys1091, and Cys1090-Cys1094. Asn908 and Asn986 each carry an N-linked (GlcNAc...) asparagine; by host glycan. A helical membrane pass occupies residues 1133 to 1153; the sequence is IHAVPFGLVSMMIAMEVVLRK. The Cytoplasmic portion of the chain corresponds to 1154-1201; it reads RQGPKQVLVGGVVLLGAMLVGQVTLLDLLELTVAVGLHFHEMNNGGDA. Residues 1202 to 1222 form a helical membrane-spanning segment; that stretch reads MYMALIAAFSVRPGLLIGFGL. Residues 1223-1287 lie on the Lumenal side of the membrane; it reads RTLWSPRERL…ILPLMALLTP (65 aa). The helical transmembrane segment at 1288–1308 threads the bilayer; it reads VTMAEVRLATMLFCTVVIIGV. Over 1309 to 1355 the chain is Cytoplasmic; it reads LHQNSKDTSMQKTIPLVALTLTSYLGLTQPFLGLCAFLATRIFGRRS. The helical transmembrane segment at 1356 to 1376 threads the bilayer; that stretch reads IPVNEALAATGLVGVLAGLAF. Residues 1377–1378 are Lumenal-facing; the sequence is QE. Residues 1379 to 1399 traverse the membrane as a helical segment; that stretch reads MENFLGPIAVGGILMMLVSVA. Residues 1400 to 1456 lie on the Cytoplasmic side of the membrane; the sequence is GRVDGLELKKLGEVSWEEEAEISGSSARYDVALSEQGEFKLLSEEKVPWDQVVMTSL. The interval 1407-1446 is interacts with and activates NS3 protease; the sequence is LKKLGEVSWEEEAEISGSSARYDVALSEQGEFKLLSEEKV. The helical intramembrane region spans 1457–1477; it reads ALVGAAIHPFALLLVLAGWLF. Over 1478 to 2157 the chain is Cytoplasmic; the sequence is HVRRARRSGD…RNALSMMPEA (680 aa). In terms of domain architecture, Peptidase S7 spans 1485–1665; the sequence is SGDVLWDIPT…EVKEEGKEEL (181 aa). Catalysis depends on charge relay system; for serine protease NS3 activity residues His1537, Asp1561, and Ser1622. A Helicase ATP-binding domain is found at 1669 to 1825; that stretch reads PTMLKKGKTT…HSNGEIEDVQ (157 aa). Residues 1673-1676 are important for RNA-binding; sequence KKGK. 1682-1689 provides a ligand contact to ATP; the sequence is FHPGAGKT. Positions 1773 to 1776 match the DEAH box motif; it reads DEAH. Residues 1820–1997 enclose the Helicase C-terminal domain; that stretch reads EIEDVQTDIP…VRGGMVAPLY (178 aa). At Lys1877 the chain carries N6-acetyllysine; by host. The disordered stretch occupies residues 1942-1961; the sequence is AAQRRGRIGRNPNRDGDSYY. Residues 2158-2178 traverse the membrane as a helical segment; it reads MTIVMLFLLAGLLTSGMVIFF. The Lumenal segment spans residues 2179–2186; the sequence is MSPKGISR. Positions 2187–2207 form an intramembrane region, helical; that stretch reads MSMAKGTMAGCGYLMFLGGVE. Residues 2208 to 2209 are Lumenal-facing; the sequence is PT. Residues 2210–2230 traverse the membrane as a helical segment; it reads HISYIMLIFFVLMVVVIPEPG. Residues 2231 to 2241 are Cytoplasmic-facing; it reads QQRSIQDNQVA. A helical transmembrane segment spans residues 2242–2256; the sequence is FLIIGILTLVSVVAA. The Lumenal portion of the chain corresponds to 2257-2293; it reads NELGMLEKTKEDLFGKKNLIPSGASPWSWPDLDLKPG. Residues 2294-2314 constitute an intramembrane region (helical); it reads AAWTVYVGIVTMLSPMLHHWI. At 2315–2360 the chain is on the lumenal side; the sequence is KVEYGNLSLSGIAQSASVLSFMDKGIPFMKMNISVIMLLVSGWNSI. Residues 2361–2380 traverse the membrane as a helical segment; that stretch reads TVMPLLCGIGCAMLHWSLIL. The Cytoplasmic portion of the chain corresponds to 2381–2421; the sequence is PGIKAQQSKLAQRRVFHGVAKNPVVDGNPTVDIEEAPEMPA. A helical membrane pass occupies residues 2422–2442; the sequence is LYEKKLALYLLLALSLASVAM. Residues 2443-2445 are Lumenal-facing; it reads CRT. Residues 2446–2466 traverse the membrane as a helical segment; that stretch reads PFSLDEGIVLASAALGPLIEG. Over 2467–3411 the chain is Cytoplasmic; it reads NTSLLWNGPM…DADLQPGELI (945 aa). Residues 2507 to 2771 enclose the mRNA cap 0-1 NS5-type MT domain; it reads GTANGKTLGE…DVTLPIGTRS (265 aa). Position 2562 (Ser2562) interacts with S-adenosyl-L-methionine. Ser2562 is modified (phosphoserine). Lys2567 serves as the catalytic For 2'-O-MTase activity. Gly2592, Trp2593, Thr2610, Leu2611, Asp2637, and Val2638 together coordinate S-adenosyl-L-methionine. Asp2652 functions as the For 2'-O-MTase activity in the catalytic mechanism. Position 2653 (Ile2653) interacts with S-adenosyl-L-methionine. Active-site for 2'-O-MTase activity residues include Lys2688 and Glu2724. S-adenosyl-L-methionine is bound at residue Tyr2726. The Nuclear localization signal signature appears at 2878-2911; sequence RKIMKVVNRWLFRHLAREKNPRLCTKEEFIAKVR. The Zn(2+) site is built by Glu2945, His2949, Cys2954, and Cys2957. One can recognise a RdRp catalytic domain in the interval 3035–3187; that stretch reads GGLYADDTAG…RPIDDRFGLA (153 aa). Zn(2+)-binding residues include His3222, Cys3238, and Cys3357.

In the N-terminal section; belongs to the class I-like SAM-binding methyltransferase superfamily. mRNA cap 0-1 NS5-type methyltransferase family. As to quaternary structure, homodimer. Interacts (via N-terminus) with host EXOC1 (via C-terminus); this interaction results in EXOC1 degradation through the proteasome degradation pathway. Forms heterodimers with envelope protein E in the endoplasmic reticulum and Golgi. In terms of assembly, homodimer; in the endoplasmic reticulum and Golgi. Interacts with protein prM. Interacts with non-structural protein 1. As to quaternary structure, homodimer; Homohexamer when secreted. Interacts with envelope protein E. Interacts (via N-terminus) with serine protease NS3. In terms of assembly, forms a heterodimer with serine protease NS3. May form homooligomers. As to quaternary structure, forms a heterodimer with NS2B. Interacts with non-structural protein 2A (via N-terminus). Interacts with NS4B. Interacts with unphosphorylated RNA-directed RNA polymerase NS5; this interaction stimulates RNA-directed RNA polymerase NS5 guanylyltransferase activity. NS3 interacts with host PDCD6IP; this interaction contributes to virion release. Interacts with serine protease NS3. In terms of assembly, homodimer. Interacts with host STAT2; this interaction prevents the establishment of cellular antiviral state. Interacts with serine protease NS3. Interacts with host TRIM23; this interaction leads to NS5 ubiquitination. Post-translationally, specific enzymatic cleavages in vivo yield mature proteins. The nascent capsid protein C contains a C-terminal hydrophobic domain that act as a signal sequence for translocation of prM into the lumen of the ER. Mature capsid protein C is cleaved at a site upstream of this hydrophobic domain by NS3. prM is cleaved in post-Golgi vesicles by a host furin, releasing the mature small envelope protein M, and peptide pr. Non-structural protein 2A-alpha, a C-terminally truncated form of non-structural protein 2A, results from partial cleavage by NS3. Specific enzymatic cleavages in vivo yield mature proteins peptide 2K acts as a signal sequence and is removed from the N-terminus of NS4B by the host signal peptidase in the ER lumen. Signal cleavage at the 2K-4B site requires a prior NS3 protease-mediated cleavage at the 4A-2K site. Cleaved in post-Golgi vesicles by a host furin, releasing the mature small envelope protein M, and peptide pr. This cleavage is incomplete as up to 30% of viral particles still carry uncleaved prM. In terms of processing, N-glycosylated. Post-translationally, N-glycosylated. The excreted form is glycosylated and this is required for efficient secretion of the protein from infected cells. Polyubiquitinated; ubiquitination is probably mediated by host TRIM23 and is prerequisite for NS5-STAT2 interaction. NS5 is not ISGylated or sumoylated. In terms of processing, acetylated by host KAT5. Acetylation modulates NS3 RNA-binding and unwinding activities and plays an important positive role for viral replication. Post-translationally, phosphorylated on serines residues. This phosphorylation may trigger NS5 nuclear localization.

The protein localises to the virion. The protein resides in the host nucleus. It localises to the host cytoplasm. Its subcellular location is the host perinuclear region. It is found in the secreted. The protein localises to the virion membrane. The protein resides in the host endoplasmic reticulum membrane. It carries out the reaction Selective hydrolysis of -Xaa-Xaa-|-Yaa- bonds in which each of the Xaa can be either Arg or Lys and Yaa can be either Ser or Ala.. It catalyses the reaction RNA(n) + a ribonucleoside 5'-triphosphate = RNA(n+1) + diphosphate. The catalysed reaction is a ribonucleoside 5'-triphosphate + H2O = a ribonucleoside 5'-diphosphate + phosphate + H(+). The enzyme catalyses ATP + H2O = ADP + phosphate + H(+). It carries out the reaction a 5'-end (5'-triphosphoguanosine)-ribonucleoside in mRNA + S-adenosyl-L-methionine = a 5'-end (N(7)-methyl 5'-triphosphoguanosine)-ribonucleoside in mRNA + S-adenosyl-L-homocysteine. It catalyses the reaction a 5'-end (N(7)-methyl 5'-triphosphoguanosine)-ribonucleoside in mRNA + S-adenosyl-L-methionine = a 5'-end (N(7)-methyl 5'-triphosphoguanosine)-(2'-O-methyl-ribonucleoside) in mRNA + S-adenosyl-L-homocysteine + H(+). Functionally, plays a role in virus budding by binding to the cell membrane and gathering the viral RNA into a nucleocapsid that forms the core of a mature virus particle. During virus entry, may induce genome penetration into the host cytoplasm after hemifusion induced by the surface proteins. Can migrate to the cell nucleus where it modulates host functions. Inhibits RNA silencing by interfering with host Dicer. Its function is as follows. Prevents premature fusion activity of envelope proteins in trans-Golgi by binding to envelope protein E at pH6.0. After virion release in extracellular space, gets dissociated from E dimers. In terms of biological role, acts as a chaperone for envelope protein E during intracellular virion assembly by masking and inactivating envelope protein E fusion peptide. prM is the only viral peptide matured by host furin in the trans-Golgi network probably to avoid catastrophic activation of the viral fusion activity in acidic Golgi compartment prior to virion release. prM-E cleavage is inefficient, and many virions are only partially matured. These uncleaved prM would play a role in immune evasion. Functionally, may play a role in virus budding. Exerts cytotoxic effects by activating a mitochondrial apoptotic pathway through M ectodomain. May display a viroporin activity. Binds to host cell surface receptor and mediates fusion between viral and cellular membranes. Envelope protein is synthesized in the endoplasmic reticulum in the form of heterodimer with protein prM. They play a role in virion budding in the ER, and the newly formed immature particle is covered with 60 spikes composed of heterodimer between precursor prM and envelope protein E. The virion is transported to the Golgi apparatus where the low pH causes dissociation of PrM-E heterodimers and formation of E homodimers. prM-E cleavage is inefficient, and many virions are only partially matured. These uncleaved prM would play a role in immune evasion. Its function is as follows. Involved in immune evasion, pathogenesis and viral replication. Once cleaved off the polyprotein, is targeted to three destinations: the viral replication cycle, the plasma membrane and the extracellular compartment. Essential for viral replication. Required for formation of the replication complex and recruitment of other non-structural proteins to the ER-derived membrane structures. Excreted as a hexameric lipoparticle that plays a role against host immune response. Antagonizing the complement function. Binds to the host macrophages and dendritic cells. Inhibits signal transduction originating from Toll-like receptor 3 (TLR3). In terms of biological role, component of the viral RNA replication complex that functions in virion assembly and antagonizes the host immune response. Functionally, required cofactor for the serine protease function of NS3. May have membrane-destabilizing activity and form viroporins. Displays three enzymatic activities: serine protease, NTPase and RNA helicase. NS3 serine protease, in association with NS2B, performs its autocleavage and cleaves the polyprotein at dibasic sites in the cytoplasm: C-prM, NS2A-NS2B, NS2B-NS3, NS3-NS4A, NS4A-2K and NS4B-NS5. NS3 RNA helicase binds RNA and unwinds dsRNA in the 3' to 5' direction. Also plays a role in virus assembly. Its function is as follows. Regulates the ATPase activity of the NS3 helicase activity. NS4A allows NS3 helicase to conserve energy during unwinding. In terms of biological role, functions as a signal peptide for NS4B and is required for the interferon antagonism activity of the latter. Functionally, induces the formation of ER-derived membrane vesicles where the viral replication takes place. Inhibits interferon (IFN)-induced host STAT1 phosphorylation and nuclear translocation, thereby preventing the establishment of cellular antiviral state by blocking the IFN-alpha/beta pathway. Replicates the viral (+) and (-) RNA genome, and performs the capping of genomes in the cytoplasm. NS5 methylates viral RNA cap at guanine N-7 and ribose 2'-O positions. Besides its role in RNA genome replication, also prevents the establishment of cellular antiviral state by blocking the interferon-alpha/beta (IFN-alpha/beta) signaling pathway. IFN-I induces binding of NS5 to host IFN-activated transcription factor STAT2, preventing its transcriptional activity. Host TRIM23 is the E3 ligase that interacts with and polyubiquitinates NS5 to promote its binding to STAT2 and trigger IFN-I signaling inhibition. This chain is Genome polyprotein, found in Aedes aegypti (Yellowfever mosquito).